Here is a 220-residue protein sequence, read N- to C-terminus: ATP synthase subunit delta (220 aa).

The protein belongs to the ATPase delta chain family. In terms of assembly, F-type ATPases have 2 components, F(1) - the catalytic core - and F(0) - the membrane proton channel. F(1) has five subunits: alpha(3), beta(3), gamma(1), delta(1), epsilon(1). F(0) has three main subunits: a(1), b(2) and c(10-14). The alpha and beta chains form an alternating ring which encloses part of the gamma chain. F(1) is attached to F(0) by a central stalk formed by the gamma and epsilon chains, while a peripheral stalk is formed by the delta and b chains.

It localises to the cell inner membrane. Its function is as follows. F(1)F(0) ATP synthase produces ATP from ADP in the presence of a proton or sodium gradient. F-type ATPases consist of two structural domains, F(1) containing the extramembraneous catalytic core and F(0) containing the membrane proton channel, linked together by a central stalk and a peripheral stalk. During catalysis, ATP synthesis in the catalytic domain of F(1) is coupled via a rotary mechanism of the central stalk subunits to proton translocation. In terms of biological role, this protein is part of the stalk that links CF(0) to CF(1). It either transmits conformational changes from CF(0) to CF(1) or is implicated in proton conduction. This is ATP synthase subunit delta from Gluconobacter oxydans (strain 621H) (Gluconobacter suboxydans).